We begin with the raw amino-acid sequence, 291 residues long: Nitrogenase iron protein (291 aa).

Glycine 11–serine 18 is an ATP binding site. Cysteine 99 is a [4Fe-4S] cluster binding site. Arginine 102 carries the post-translational modification ADP-ribosylarginine; by dinitrogenase reductase ADP-ribosyltransferase. [4Fe-4S] cluster is bound at residue cysteine 133.

Belongs to the NifH/BchL/ChlL family. As to quaternary structure, homodimer. Requires [4Fe-4S] cluster as cofactor. Post-translationally, the reversible ADP-ribosylation of Arg-102 inactivates the nitrogenase reductase and regulates nitrogenase activity.

It carries out the reaction N2 + 8 reduced [2Fe-2S]-[ferredoxin] + 16 ATP + 16 H2O = H2 + 8 oxidized [2Fe-2S]-[ferredoxin] + 2 NH4(+) + 16 ADP + 16 phosphate + 6 H(+). Its function is as follows. The key enzymatic reactions in nitrogen fixation are catalyzed by the nitrogenase complex, which has 2 components: the iron protein and the molybdenum-iron protein. The chain is Nitrogenase iron protein from Cereibacter sphaeroides (strain ATCC 17023 / DSM 158 / JCM 6121 / CCUG 31486 / LMG 2827 / NBRC 12203 / NCIMB 8253 / ATH 2.4.1.) (Rhodobacter sphaeroides).